The sequence spans 123 residues: DPEP2 neighbor protein (123 aa).

The tract at residues 67–123 (APLATPTKAEAEKPAPRRAPKRRQATIESDKDLGCSSPKIRRLEHRGRRLTPQKLAG) is disordered. The segment covering 105 to 117 (KIRRLEHRGRRLT) has biased composition (basic residues).

This is DPEP2 neighbor protein from Homo sapiens (Human).